The chain runs to 417 residues: BSD domain-containing protein 1-B (417 aa).

In terms of domain architecture, BSD spans 153–205; sequence WLAYWDPEQRKAEISEPLVTSPSIRALFTKMVPAAVSHSEFWQRYFYKVHQLE. Disordered stretches follow at residues 215–234, 262–292, and 323–390; these read KQRA…EEEE, HVED…SISP, and AAET…DFDM. Residues 262-278 are compositionally biased toward basic and acidic residues; that stretch reads HVEDKSEKTAELNRDHT. A compositionally biased stretch (low complexity) spans 281–292; it reads TSPSESSESISP. The segment covering 332–343 has biased composition (polar residues); sequence PVEQTGKSNAQM. Positions 345 to 356 are enriched in basic and acidic residues; sequence THREDPPSDLRV. The segment covering 360–379 has biased composition (polar residues); that stretch reads NSDSGKSTPSNNGQKGSSTD. A compositionally biased stretch (acidic residues) spans 380–390; sequence VSEDWEKDFDM.

This chain is BSD domain-containing protein 1-B (bsdc1-b), found in Xenopus laevis (African clawed frog).